The following is a 541-amino-acid chain: uncharacterized protein (541 aa).

12 helical membrane passes run 99 to 119 (WIVVVQISLIAFVVTFGSSVY), 131 to 153 (GVSISVSSLGSCVFLVGFGFGSL), 165 to 185 (FVVYFCTLLMFTLFQIGGGCA), 187 to 207 (NIWTLVILRFFQGFFGSTPLS), 224 to 244 (YVLPGFCTFPFLGPIFGPIIG), 256 to 276 (WVFWINMIMGAVVIVIIFFFM), 325 to 345 (LLITEPIVVCFTLYLTVVYII), 367 to 387 (IGLSFIGIGIGIVLAGACTPI), 409 to 429 (LYPLFFGSIMLPISMFWFAWT), 439 to 459 (WIVPLISSIFFGWSLLFVFFV), 472 to 494 (AASALAAATLVRYAASGGMSLVG), and 508 to 528 (SLLGFISVGMIPIPFLFFIYG).

It belongs to the major facilitator superfamily. CAR1 family.

Its subcellular location is the membrane. This is an uncharacterized protein from Schizosaccharomyces pombe (strain 972 / ATCC 24843) (Fission yeast).